A 277-amino-acid chain; its full sequence is 5-formyltetrahydrofolate cyclo-ligase, mitochondrial (277 aa).

A mitochondrion-targeting transit peptide spans 1–48; that stretch reads MIGARVFCITTTALRRSPIFFFPKIPTRPVFRLSPATRPIVAMSTTSK. An ATP-binding site is contributed by 60–64; sequence KRVVR. Residues E113 and 207–211 contribute to the substrate site; that span reads RGGGY. Residues 206–213 and D254 contribute to the ATP site; that span reads GRGGGYYD.

It belongs to the 5-formyltetrahydrofolate cyclo-ligase family. In terms of assembly, monomer.

The protein localises to the mitochondrion. The catalysed reaction is (6S)-5-formyl-5,6,7,8-tetrahydrofolate + ATP = (6R)-5,10-methenyltetrahydrofolate + ADP + phosphate. In terms of biological role, contributes to tetrahydrofolate metabolism and photorespiration through the regulation of serine hydroxymethyltransferase. Prefers the pentalutamyl to the monoglutamyl form of 5-formyltetrahydrofolate. This is 5-formyltetrahydrofolate cyclo-ligase, mitochondrial (5FCL) from Arabidopsis thaliana (Mouse-ear cress).